A 292-amino-acid chain; its full sequence is NAD kinase (292 aa).

The active-site Proton acceptor is Asp-73. NAD(+) contacts are provided by residues 73-74 (DG), 147-148 (NE), His-158, Arg-175, Asp-177, 188-193 (TAYSLS), and Gln-247.

This sequence belongs to the NAD kinase family. The cofactor is a divalent metal cation.

The protein localises to the cytoplasm. The enzyme catalyses NAD(+) + ATP = ADP + NADP(+) + H(+). Functionally, involved in the regulation of the intracellular balance of NAD and NADP, and is a key enzyme in the biosynthesis of NADP. Catalyzes specifically the phosphorylation on 2'-hydroxyl of the adenosine moiety of NAD to yield NADP. This Escherichia coli (strain UTI89 / UPEC) protein is NAD kinase.